The following is a 213-amino-acid chain: Motile sperm domain-containing protein 1 (213 aa).

Positions 16-143 (PVFVFPTELI…KEHLTESLFF (128 aa)) constitute an MSP domain. 2 consecutive transmembrane segments (helical) span residues 159–179 (SLLT…PTLG) and 191–211 (LSVN…MAIL). Residues 205–208 (LITM) carry the Nuclear export signal motif.

It is found in the endoplasmic reticulum membrane. It localises to the golgi apparatus membrane. Functionally, plays a role in differentiation and/or proliferation of mesenchymal stem cells. Proposed to be involved in epithelial-to-mesenchymal transition (EMT). However, another study suggests that it is not required for EMT or stem cell self-renewal and acts during later stages of differentiation. This is Motile sperm domain-containing protein 1 (MOSPD1) from Homo sapiens (Human).